A 594-amino-acid polypeptide reads, in one-letter code: Potassium-transporting ATPase potassium-binding subunit (594 aa).

The next 10 helical transmembrane spans lie at Ala3 to Leu23, Ala67 to Leu87, Ala136 to Val156, Leu179 to Val199, Leu287 to Val307, Val314 to Phe334, Gly415 to Gly435, Val453 to Leu473, Val519 to Leu539, and Leu562 to Ala582.

This sequence belongs to the KdpA family. The system is composed of three essential subunits: KdpA, KdpB and KdpC.

It localises to the cell inner membrane. In terms of biological role, part of the high-affinity ATP-driven potassium transport (or Kdp) system, which catalyzes the hydrolysis of ATP coupled with the electrogenic transport of potassium into the cytoplasm. This subunit binds the periplasmic potassium ions and delivers the ions to the membrane domain of KdpB through an intramembrane tunnel. This is Potassium-transporting ATPase potassium-binding subunit from Bordetella pertussis (strain Tohama I / ATCC BAA-589 / NCTC 13251).